A 270-amino-acid chain; its full sequence is Glutamate racemase (270 aa).

Substrate is bound by residues 10 to 11 and 42 to 43; these read DS and YG. Cys74 (proton donor/acceptor) is an active-site residue. 75–76 serves as a coordination point for substrate; sequence NT. The active-site Proton donor/acceptor is Cys189. 190-191 contributes to the substrate binding site; the sequence is TH.

It belongs to the aspartate/glutamate racemases family.

It catalyses the reaction L-glutamate = D-glutamate. The protein operates within cell wall biogenesis; peptidoglycan biosynthesis. Its function is as follows. Provides the (R)-glutamate required for cell wall biosynthesis. This chain is Glutamate racemase, found in Bartonella henselae (strain ATCC 49882 / DSM 28221 / CCUG 30454 / Houston 1) (Rochalimaea henselae).